Here is a 363-residue protein sequence, read N- to C-terminus: 3-isopropylmalate dehydrogenase (363 aa).

78–91 is a binding site for NAD(+); that stretch reads GKKWDYLPIESRPE. The substrate site is built by arginine 99, arginine 109, arginine 138, and aspartate 227. Aspartate 227, aspartate 251, and aspartate 255 together coordinate Mg(2+). Residue 285 to 297 participates in NAD(+) binding; sequence GSAPDIEGKNIAN.

It belongs to the isocitrate and isopropylmalate dehydrogenases family. LeuB type 1 subfamily. As to quaternary structure, homodimer. Requires Mg(2+) as cofactor. Mn(2+) serves as cofactor.

It is found in the cytoplasm. The enzyme catalyses (2R,3S)-3-isopropylmalate + NAD(+) = 4-methyl-2-oxopentanoate + CO2 + NADH. Its pathway is amino-acid biosynthesis; L-leucine biosynthesis; L-leucine from 3-methyl-2-oxobutanoate: step 3/4. Functionally, catalyzes the oxidation of 3-carboxy-2-hydroxy-4-methylpentanoate (3-isopropylmalate) to 3-carboxy-4-methyl-2-oxopentanoate. The product decarboxylates to 4-methyl-2 oxopentanoate. This is 3-isopropylmalate dehydrogenase from Buchnera aphidicola subsp. Schizaphis graminum (strain Sg).